The primary structure comprises 419 residues: Thymidine phosphorylase (419 aa).

The protein belongs to the thymidine/pyrimidine-nucleoside phosphorylase family. In terms of assembly, homodimer.

It carries out the reaction thymidine + phosphate = 2-deoxy-alpha-D-ribose 1-phosphate + thymine. The enzymes which catalyze the reversible phosphorolysis of pyrimidine nucleosides are involved in the degradation of these compounds and in their utilization as carbon and energy sources, or in the rescue of pyrimidine bases for nucleotide synthesis. The sequence is that of Thymidine phosphorylase (deoA) from Mycoplasmoides pirum (Mycoplasma pirum).